Reading from the N-terminus, the 69-residue chain is Photosystem I reaction center subunit IV (69 aa).

Belongs to the PsaE family.

Its subcellular location is the cellular thylakoid membrane. In terms of biological role, stabilizes the interaction between PsaC and the PSI core, assists the docking of the ferredoxin to PSI and interacts with ferredoxin-NADP oxidoreductase. The chain is Photosystem I reaction center subunit IV from Prochlorococcus marinus (strain MIT 9515).